The sequence spans 151 residues: UPF0178 protein Tcr_1995 (151 aa).

A disordered region spans residues 116 to 135 (RSSGVDTGGPPPLNQKDRQA).

The protein belongs to the UPF0178 family.

This chain is UPF0178 protein Tcr_1995, found in Hydrogenovibrio crunogenus (strain DSM 25203 / XCL-2) (Thiomicrospira crunogena).